A 207-amino-acid chain; its full sequence is Large ribosomal subunit protein bL25 (207 aa).

This sequence belongs to the bacterial ribosomal protein bL25 family. CTC subfamily. In terms of assembly, part of the 50S ribosomal subunit; part of the 5S rRNA/L5/L18/L25 subcomplex. Contacts the 5S rRNA. Binds to the 5S rRNA independently of L5 and L18.

This is one of the proteins that binds to the 5S RNA in the ribosome where it forms part of the central protuberance. The polypeptide is Large ribosomal subunit protein bL25 (Brucella canis (strain ATCC 23365 / NCTC 10854 / RM-666)).